The primary structure comprises 430 residues: tRNA(Ile)-lysidine synthase (430 aa).

24-29 (SGGLDS) is an ATP binding site.

This sequence belongs to the tRNA(Ile)-lysidine synthase family.

The protein localises to the cytoplasm. The catalysed reaction is cytidine(34) in tRNA(Ile2) + L-lysine + ATP = lysidine(34) in tRNA(Ile2) + AMP + diphosphate + H(+). Functionally, ligates lysine onto the cytidine present at position 34 of the AUA codon-specific tRNA(Ile) that contains the anticodon CAU, in an ATP-dependent manner. Cytidine is converted to lysidine, thus changing the amino acid specificity of the tRNA from methionine to isoleucine. This is tRNA(Ile)-lysidine synthase from Haemophilus influenzae (strain PittGG).